The chain runs to 662 residues: LIM domain kinase 1 (662 aa).

LIM zinc-binding domains follow at residues 24-83 (PVCA…RFGE) and 84-145 (LCHG…MVVT). Positions 166–259 (LVSIPACSDG…LLQLTIEHDP (94 aa)) constitute a PDZ domain. Positions 262-328 (PLPRDLALPC…ASQRKDIGRS (67 aa)) are disordered. Over residues 272–287 (SPLPDPHSPLRSPVPA) the composition is skewed to pro residues. The span at 309 to 320 (SPGSSSVGSPAS) shows a compositional bias: low complexity. In terms of domain architecture, Protein kinase spans 346–611 (LIHGEVLGKG…PSFSKLEQWL (266 aa)). ATP contacts are provided by residues 352-360 (LGKGCFGQA) and K375. The active site involves D467.

This sequence belongs to the protein kinase superfamily. TKL Ser/Thr protein kinase family. Expressed predominantly in the brain.

The protein resides in the cytoplasm. Its subcellular location is the nucleus. It localises to the cytoskeleton. The protein localises to the cell projection. It is found in the growth cone. It catalyses the reaction L-seryl-[protein] + ATP = O-phospho-L-seryl-[protein] + ADP + H(+). The enzyme catalyses L-threonyl-[protein] + ATP = O-phospho-L-threonyl-[protein] + ADP + H(+). Protein kinase which regulates actin filament dynamics. Phosphorylates and inactivates the actin binding/depolymerizing factor cofilin, thereby stabilizing the actin cytoskeleton. Required for motility of the axon growth cone. The chain is LIM domain kinase 1 (LIMK1) from Gallus gallus (Chicken).